A 109-amino-acid chain; its full sequence is Cytochrome c6 (109 aa).

An N-terminal signal peptide occupies residues 1–25 (MFKNIIIVVAVTLCALFTNEHVVYS). Heme c is bound by residues cysteine 39, cysteine 42, histidine 43, and methionine 83.

This sequence belongs to the cytochrome c family. PetJ subfamily. In terms of assembly, monomer. Post-translationally, binds 1 heme c group covalently per subunit.

The protein localises to the plastid. It localises to the chloroplast thylakoid lumen. Functionally, functions as an electron carrier between membrane-bound cytochrome b6-f and photosystem I in oxygenic photosynthesis. The chain is Cytochrome c6 (petJ) from Cyanidium caldarium (Red alga).